The primary structure comprises 377 residues: DAR GTPase 2, mitochondrial (377 aa).

A mitochondrion-targeting transit peptide spans 1-21; it reads MATAKTWKIAREIGDAVIKAS. In terms of domain architecture, CP-type G spans 34-211; that stretch reads AAAVRAISER…VLDTPGIFPP (178 aa). The DARXP motif signature appears at 55-59; it reads DARIP. Residues 82-85, 110-111, 150-155, and Gly-207 each bind GTP; these read NKME, NS, and NVGKSA.

It belongs to the TRAFAC class YlqF/YawG GTPase family. MTG1 subfamily.

Its subcellular location is the mitochondrion. Functionally, GTPase that may function in mitochondrial ribosome assembly. The protein is DAR GTPase 2, mitochondrial of Arabidopsis thaliana (Mouse-ear cress).